We begin with the raw amino-acid sequence, 894 residues long: Alanine--tRNA ligase (894 aa).

Residues histidine 587, histidine 591, cysteine 691, and histidine 695 each contribute to the Zn(2+) site. Residues 739 to 758 (AEGDRAAEEAKGRLQEERDA) form a disordered region.

This sequence belongs to the class-II aminoacyl-tRNA synthetase family. Zn(2+) is required as a cofactor.

It is found in the cytoplasm. It catalyses the reaction tRNA(Ala) + L-alanine + ATP = L-alanyl-tRNA(Ala) + AMP + diphosphate. Catalyzes the attachment of alanine to tRNA(Ala) in a two-step reaction: alanine is first activated by ATP to form Ala-AMP and then transferred to the acceptor end of tRNA(Ala). Also edits incorrectly charged Ser-tRNA(Ala) and Gly-tRNA(Ala) via its editing domain. The polypeptide is Alanine--tRNA ligase (Cenarchaeum symbiosum (strain A)).